The following is a 368-amino-acid chain: 4-hydroxy-3-methylbut-2-en-1-yl diphosphate synthase (flavodoxin) (368 aa).

C268, C271, C303, and E310 together coordinate [4Fe-4S] cluster.

The protein belongs to the IspG family. It depends on [4Fe-4S] cluster as a cofactor.

The catalysed reaction is (2E)-4-hydroxy-3-methylbut-2-enyl diphosphate + oxidized [flavodoxin] + H2O + 2 H(+) = 2-C-methyl-D-erythritol 2,4-cyclic diphosphate + reduced [flavodoxin]. The protein operates within isoprenoid biosynthesis; isopentenyl diphosphate biosynthesis via DXP pathway; isopentenyl diphosphate from 1-deoxy-D-xylulose 5-phosphate: step 5/6. Converts 2C-methyl-D-erythritol 2,4-cyclodiphosphate (ME-2,4cPP) into 1-hydroxy-2-methyl-2-(E)-butenyl 4-diphosphate. This is 4-hydroxy-3-methylbut-2-en-1-yl diphosphate synthase (flavodoxin) from Listeria monocytogenes serotype 4b (strain F2365).